Consider the following 438-residue polypeptide: uncharacterized protein (438 aa).

This is an uncharacterized protein from Acanthamoeba polyphaga mimivirus (APMV).